A 476-amino-acid chain; its full sequence is Membrane-bound lytic murein transglycosylase F (476 aa).

Residues 1–22 (MTRFLFALILGFLLTACQQVTV) form the signal peptide. The tract at residues 23–257 (DETEFVPKKL…HLNEKYFGHV (235 aa)) is non-LT domain. An LT domain region spans residues 258–476 (KRFDYVDTRA…AGTLSPEQPK (219 aa)). E302 is a catalytic residue. The segment at 446-476 (SKQQNPEEEPSDLASEEPAIPAGTLSPEQPK) is disordered. Over residues 451 to 460 (PEEEPSDLAS) the composition is skewed to acidic residues.

The protein in the N-terminal section; belongs to the bacterial solute-binding protein 3 family. In the C-terminal section; belongs to the transglycosylase Slt family.

It localises to the cell outer membrane. The enzyme catalyses Exolytic cleavage of the (1-&gt;4)-beta-glycosidic linkage between N-acetylmuramic acid (MurNAc) and N-acetylglucosamine (GlcNAc) residues in peptidoglycan, from either the reducing or the non-reducing ends of the peptidoglycan chains, with concomitant formation of a 1,6-anhydrobond in the MurNAc residue.. Murein-degrading enzyme that degrades murein glycan strands and insoluble, high-molecular weight murein sacculi, with the concomitant formation of a 1,6-anhydromuramoyl product. Lytic transglycosylases (LTs) play an integral role in the metabolism of the peptidoglycan (PG) sacculus. Their lytic action creates space within the PG sacculus to allow for its expansion as well as for the insertion of various structures such as secretion systems and flagella. This chain is Membrane-bound lytic murein transglycosylase F, found in Shewanella baltica (strain OS155 / ATCC BAA-1091).